The primary structure comprises 221 residues: 7-cyano-7-deazaguanine synthase (221 aa).

10 to 20 (FSGGQDSTTCL) serves as a coordination point for ATP. 4 residues coordinate Zn(2+): C186, C195, C198, and C201.

This sequence belongs to the QueC family. As to quaternary structure, homodimer. Requires Zn(2+) as cofactor.

It carries out the reaction 7-carboxy-7-deazaguanine + NH4(+) + ATP = 7-cyano-7-deazaguanine + ADP + phosphate + H2O + H(+). The protein operates within purine metabolism; 7-cyano-7-deazaguanine biosynthesis. Its function is as follows. Catalyzes the ATP-dependent conversion of 7-carboxy-7-deazaguanine (CDG) to 7-cyano-7-deazaguanine (preQ(0)). This Anoxybacillus flavithermus (strain DSM 21510 / WK1) protein is 7-cyano-7-deazaguanine synthase.